The chain runs to 927 residues: MGDMQDHEKVLEIPDRDSEEELEHVIEQIAYRDLDIPVTEMQESEALPTEQTATDYIPTSTSTSHPSSSQVYVELQELMMDQRNQELQWVEAAHWIGLEENLREDGVWGRPHLSYLTFWSLLELQKVFSKGTFLLDLAETSLAGVANKLLDSFIYEDQIRPQDRDELLRALLLKRSHAEDLKDLEGVKPAVLTRSGAPSEPLLPHQPSLETKLYCAQAEGGSEEPSPSGILKIPPNSETTLVLVGRASFLVKPVLGFVRLKEAVPLEDLVLPEPVSFLLVLLGPEAPHIDYTQLGRAAATLMTERVFRVTASLAQSRGELLSSLDSFLDCSLVLPPTEAPSEKALLNLVPVQKELLRKRYLPRPAKPDPNLYEALDGGKEGPGDEDDPLRRTGRIFGGLIRDIRRRYPYYLSDITDALSPQVLAAVIFIYFAALSPAVTFGGLLGEKTRNLMGVSELLISTAVQGILFALLGAQPLLVLGFSGPLLVFEEAFYSFCESNNLEYIVGRAWIGFWLILLVVLVVAFEGSFLVQYISRYTQEIFSFLISLIFIYETFSKLIKIFQDYPLQESYAPVVMKPKPQGPVPNTALLSLVLMVGTFLLAMMLRKFKNSTYFPGKLRRVIGDFGVPISILIMVLVDTFIKNTYTQKLSVPDGLKVSNSSARGWVIHPLGLYNHFPKWMMFASVLPALLVFILIFLESQITTLIVSKPERKMIKGSGFHLDLLLVVGMGGVAALFGMPWLSATTVRSVTHANALTVMGKASGPGAAAQIQEVKEQRISGLLVSVLVGLSILMEPILSRIPLAVLFGIFLYMGITSLSGIQLFDRILLLFKPPKYHPDVPFVKRVKTWRMHLFTGIQIICLAVLWVVKSTPASLALPFVLILTVPLRRLLLPLIFRELELQCLDGDDAKVTFDEAEGLDEYDEVPMPV.

The residue at position 1 (Met1) is an N-acetylmethionine. At 1 to 420 the chain is on the cytoplasmic side; sequence MGDMQDHEKV…LSDITDALSP (420 aa). Ser18 carries the phosphoserine modification. Residues Tyr31 and Tyr56 each carry the phosphotyrosine modification. Residues 69–303 form a globular region; sequence SQVYVELQEL…LGRAAATLMT (235 aa). The tract at residues 190-199 is interaction with ANK1; the sequence is AVLTRSGAPS. A phosphoserine mark is found at Ser199 and Ser222. The segment at 317–370 is dimerization arm; the sequence is RGELLSSLDSFLDCSLVLPPTEAPSEKALLNLVPVQKELLRKRYLPRPAKPDPN. The disordered stretch occupies residues 367–390; that stretch reads PDPNLYEALDGGKEGPGDEDDPLR. Phosphotyrosine is present on Tyr372. The helical transmembrane segment at 421–444 threads the bilayer; sequence QVLAAVIFIYFAALSPAVTFGGLL. The Extracellular portion of the chain corresponds to 445-452; that stretch reads GEKTRNLM. Residues 453–473 traverse the membrane as a helical segment; it reads GVSELLISTAVQGILFALLGA. Residues 474–476 are Cytoplasmic-facing; sequence QPL. Residues 477–493 form a discontinuously helical membrane-spanning segment; that stretch reads LVLGFSGPLLVFEEAFY. Residues 494 to 502 are Extracellular-facing; sequence SFCESNNLE. Residues 503-523 traverse the membrane as a helical segment; sequence YIVGRAWIGFWLILLVVLVVA. Topologically, residues 524 to 535 are cytoplasmic; it reads FEGSFLVQYISR. The chain crosses the membrane as a helical span at residues 536–558; it reads YTQEIFSFLISLIFIYETFSKLI. Residues 559-586 lie on the Extracellular side of the membrane; the sequence is KIFQDYPLQESYAPVVMKPKPQGPVPNT. The helical transmembrane segment at 587-607 threads the bilayer; the sequence is ALLSLVLMVGTFLLAMMLRKF. Over 608 to 618 the chain is Cytoplasmic; sequence KNSTYFPGKLR. A helical transmembrane segment spans residues 619–639; sequence RVIGDFGVPISILIMVLVDTF. Residues 640–679 lie on the Extracellular side of the membrane; it reads IKNTYTQKLSVPDGLKVSNSSARGWVIHPLGLYNHFPKWM. Asn658 carries an N-linked (GlcNAc...) asparagine glycan. Residues 680–700 form a helical membrane-spanning segment; that stretch reads MFASVLPALLVFILIFLESQI. The Cytoplasmic portion of the chain corresponds to 701-716; it reads TTLIVSKPERKMIKGS. The chain crosses the membrane as a helical span at residues 717 to 735; it reads GFHLDLLLVVGMGGVAALF. Residues 736-753 traverse the membrane as a discontinuously helical segment; sequence GMPWLSATTVRSVTHANA. The Cytoplasmic portion of the chain corresponds to 754 to 776; that stretch reads LTVMGKASGPGAAAQIQEVKEQR. 2 consecutive transmembrane segments (helical) span residues 777–797 and 798–816; these read ISGL…PILS and RIPL…ITSL. The Cytoplasmic portion of the chain corresponds to 817 to 854; it reads SGIQLFDRILLLFKPPKYHPDVPFVKRVKTWRMHLFTG. An intramembrane region (discontinuously helical) is located at residues 855-885; sequence IQIICLAVLWVVKSTPASLALPFVLILTVPL. The S-palmitoyl cysteine moiety is linked to residue Cys859. The Cytoplasmic segment spans residues 886–927; that stretch reads RRLLLPLIFRELELQCLDGDDAKVTFDEAEGLDEYDEVPMPV. Tyr920 bears the Phosphotyrosine mark.

This sequence belongs to the anion exchanger (TC 2.A.31) family. A dimer in solution, but in its membrane environment, it exists primarily as a mixture of dimers and tetramers and spans the membrane asymmetrically. Component of the ankyrin-1 complex in the erythrocyte, composed of ANK1, RHCE, RHAG, SLC4A1, EPB42, GYPA, GYPB and AQP1. Interacts with STOM; this interaction positively regulates SLC4A1 activity. Interacts with GYPA; a GYPA monomer is bound at each end of the SLC4A1 dimer forming a heterotetramer. Three SLC4A1 dimers (Band 3-I, Band 3-II and Band 3-III) participates in the ankyrin-1 complex. Interacts (via the cytoplasmic domain) with EPB42; this interaction is mediated by the SLC4A1 Band 3-I dimer. Interacts (via the cytoplasmic domain) directly with ANK1; this interaction is mediated by the SLC4A1 Band 3-II and Band 3-III dimers. As to quaternary structure, interacts with TMEM139. In terms of tissue distribution, kidney.

It is found in the cell membrane. It localises to the basolateral cell membrane. The catalysed reaction is hydrogencarbonate(in) + chloride(out) = hydrogencarbonate(out) + chloride(in). In terms of biological role, functions both as a transporter that mediates electroneutral anion exchange across the cell membrane and as a structural protein. Component of the ankyrin-1 complex of the erythrocyte membrane; required for normal flexibility and stability of the erythrocyte membrane and for normal erythrocyte shape via the interactions of its cytoplasmic domain with cytoskeletal proteins, glycolytic enzymes, and hemoglobin. Functions as a transporter that mediates the 1:1 exchange of inorganic anions across the erythrocyte membrane. Mediates chloride-bicarbonate exchange in the kidney, and is required for normal acidification of the urine. The sequence is that of Band 3 anion transport protein from Rattus norvegicus (Rat).